A 156-amino-acid chain; its full sequence is 6,7-dimethyl-8-ribityllumazine synthase (156 aa).

5-amino-6-(D-ribitylamino)uracil-binding positions include phenylalanine 22, 57 to 59 (AYE), and 81 to 83 (SVI). Residue 86-87 (GT) participates in (2S)-2-hydroxy-3-oxobutyl phosphate binding. Histidine 89 acts as the Proton donor in catalysis. Phenylalanine 114 contributes to the 5-amino-6-(D-ribitylamino)uracil binding site. Residue arginine 128 participates in (2S)-2-hydroxy-3-oxobutyl phosphate binding.

The protein belongs to the DMRL synthase family. As to quaternary structure, forms an icosahedral capsid composed of 60 subunits, arranged as a dodecamer of pentamers.

The catalysed reaction is (2S)-2-hydroxy-3-oxobutyl phosphate + 5-amino-6-(D-ribitylamino)uracil = 6,7-dimethyl-8-(1-D-ribityl)lumazine + phosphate + 2 H2O + H(+). It participates in cofactor biosynthesis; riboflavin biosynthesis; riboflavin from 2-hydroxy-3-oxobutyl phosphate and 5-amino-6-(D-ribitylamino)uracil: step 1/2. Functionally, catalyzes the formation of 6,7-dimethyl-8-ribityllumazine by condensation of 5-amino-6-(D-ribitylamino)uracil with 3,4-dihydroxy-2-butanone 4-phosphate. This is the penultimate step in the biosynthesis of riboflavin. This chain is 6,7-dimethyl-8-ribityllumazine synthase, found in Photobacterium leiognathi.